A 66-amino-acid polypeptide reads, in one-letter code: Myrmicitoxin(1)-Pr5a (66 aa).

A signal peptide spans 1 to 25; that stretch reads MRSLYLSFSLTIIFVLVIMHAEAKA. A propeptide spanning residues 26 to 37 is cleaved from the precursor; the sequence is ISEPNAIAEADP. Val65 carries the valine amide modification.

This sequence belongs to the formicidae venom clade 3 family. Expressed by the venom gland.

It localises to the secreted. Its function is as follows. Toxin that causes a rapid and irreversible paralysis when intrathoracically injected into insects (blowflies). Does not cause spontaneous nocifensive behaviors by intraplantar injection in mice. Exhibits hemolytic and cytotoxic activities on HEK293 cells. This Pogonomyrmex rugosus (Desert harvester ant) protein is Myrmicitoxin(1)-Pr5a.